We begin with the raw amino-acid sequence, 472 residues long: Argininosuccinate lyase (472 aa).

This sequence belongs to the lyase 1 family. Argininosuccinate lyase subfamily.

It is found in the cytoplasm. It catalyses the reaction 2-(N(omega)-L-arginino)succinate = fumarate + L-arginine. Its pathway is amino-acid biosynthesis; L-arginine biosynthesis; L-arginine from L-ornithine and carbamoyl phosphate: step 3/3. The sequence is that of Argininosuccinate lyase from Rhodococcus opacus (strain B4).